The following is a 659-amino-acid chain: Polyamine transporter 4 (659 aa).

2 stretches are compositionally biased toward polar residues: residues 1–20 (MPSS…NIQQ) and 28–45 (NVTN…TGSI). The interval 1 to 81 (MPSSLTKTES…LDWDGPDDPD (81 aa)) is disordered. Topologically, residues 1 to 99 (MPSSLTKTES…KKWYTTMTSA (99 aa)) are cytoplasmic. The helical transmembrane segment at 100–120 (FLCLVVTMGSSLYVSSVPELV) threads the bilayer. Residues 121–128 (ERYHVSQT) are Extracellular-facing. The helical transmembrane segment at 129-149 (LALAGLTFYLLGLSTVIGAPL) threads the bilayer. Residues 150–157 (SEVFGRKP) lie on the Cytoplasmic side of the membrane. The helical transmembrane segment at 158–178 (VYLFSLPVSMLFTMGVGLSNG) threads the bilayer. The Extracellular portion of the chain corresponds to 179 to 187 (HMRIILPLR). Residues 188–208 (FLSGVFASPALSVGSGTILDI) form a helical membrane-spanning segment. Residues 209 to 215 (FDVDQVS) lie on the Cytoplasmic side of the membrane. The chain crosses the membrane as a helical span at residues 216–236 (VAMTYFVLSPFLGPVLSPIMA). Over 237–246 (GFATEAKGWR) the chain is Extracellular. A helical transmembrane segment spans residues 247–267 (WSEWIQLIAGGLILPFIALMP). Topologically, residues 268–316 (ETHKGIILRKRAKKRNIALKKFSREAQKEFLKTTVTITILRPLKMLVVE) are cytoplasmic. The chain crosses the membrane as a helical span at residues 317-337 (PIVFVFSVYVAFIFAILFGFF). Topologically, residues 338–355 (EAYAVIYRGVYHMSMGIS) are extracellular. A helical membrane pass occupies residues 356–376 (GLPFIGIGVGLWIGAFFYLYI). Topologically, residues 377–423 (DRKYLFPKPPAGTQPLTEKERTSKRTTPYRGARDAETGELLPVVPEK) are cytoplasmic. Residues 387-408 (AGTQPLTEKERTSKRTTPYRGA) are disordered. A helical membrane pass occupies residues 424–444 (FLIACKFGSVALPIGLFWQAW). The Extracellular portion of the chain corresponds to 445-456 (TARSDVHWMAPV). The helical transmembrane segment at 457–477 (AAGVPFGFGLILIFFSVLMYF) threads the bilayer. The Cytoplasmic portion of the chain corresponds to 478–486 (STCYPPLTV). The chain crosses the membrane as a helical span at residues 487–509 (ASCLAANNLLRYVMSSVFPLFTI). Residues 510–518 (QMYTKMKIK) lie on the Extracellular side of the membrane. Residues 519–539 (WASTLFALVCVVMIPIPWVFE) traverse the membrane as a helical segment. The Cytoplasmic portion of the chain corresponds to 540-659 (KWGSKLRHKS…MATDASARMV (120 aa)). The segment covering 587–602 (METDPSTREKPGERLS) has biased composition (basic and acidic residues). A disordered region spans residues 587–631 (METDPSTREKPGERLSLRRTHTQPVPASFDREDGQHAQNRNEPIS). Phosphothreonine is present on residues Thr589, Thr606, and Thr608. Residues 622 to 631 (HAQNRNEPIS) show a composition bias toward polar residues. Residues Ser633 and Ser646 each carry the phosphoserine modification.

This sequence belongs to the major facilitator superfamily. DHA1 family. Polyamines/proton antiporter (TC 2.A.1.2.16) subfamily.

It is found in the cell membrane. Its function is as follows. Cell membrane polyamine/proton antiporter, involved in the detoxification of excess polyamines in the cytoplasm. Recognizes spermidine, spermine and the antimalarial drug quinidine, but not quinine, chloroquine and mefloquine. The chain is Polyamine transporter 4 (TPO4) from Saccharomyces cerevisiae (strain ATCC 204508 / S288c) (Baker's yeast).